A 485-amino-acid chain; its full sequence is Aerolysin-5 (485 aa).

The first 23 residues, 1–23 (MQKLKITGLSLIISGLLMAQRHA), serve as a signal peptide directing secretion. 2 disulfides stabilise this stretch: C42–C98 and C182–C187. An interaction with host N-linked glycan region spans residues 68 to 84 (WQISGLANGWVIMGPVY). The part of the transmembrane beta-barrel after proteolytic activation of the toxin and insertion into the host membrane stretch occupies residues 256–288 (YGLSEKVTTKNKFKWPLVGETELSIEIAANQSW). Positions 346-355 (RWGGNAWYTH) are interaction with glycans from host GPI-anchor. A propeptide spanning residues 446–485 (AADGKAPRALSARRGEQGLRLAIPLECRKSSPGLASATSA) is cleaved from the precursor.

The protein belongs to the aerolysin family. In terms of assembly, homodimer in solution; homoheptamer in the host membrane. After binding to GPI-anchored proteins in target membranes and proteolytic removal of the C-terminal propeptide, the protein assembles into a heptameric pre-pore complex. A further conformation change leads to insertion into the host membrane. Post-translationally, proteolytic cleavage and subsequent release of the propeptide trigger a major conformation change, leading to the formation of a heptameric pre-pore that then inserts into the host membrane.

It is found in the secreted. Its subcellular location is the host cell membrane. In terms of biological role, secreted, cytolytic toxin that forms pores in host membranes after proteolytic removal of a C-terminal propeptide, leading to destruction of the membrane permeability barrier and cell death. The pores are formed by transmembrane beta-strands and are approximately 3 nm in diameter. This chain is Aerolysin-5 (ahh5), found in Aeromonas hydrophila.